A 284-amino-acid polypeptide reads, in one-letter code: Tropomyosin (284 aa).

Residues Met1–Tyr284 adopt a coiled-coil conformation. The disordered stretch occupies residues Thr111–Glu131.

Belongs to the tropomyosin family. In terms of assembly, homodimer.

Tropomyosin, in association with the troponin complex, plays a central role in the calcium dependent regulation of muscle contraction. The chain is Tropomyosin from Schistosoma japonicum (Blood fluke).